The chain runs to 521 residues: CDP-diacylglycerol--glycerol-3-phosphate 3-phosphatidyltransferase (521 aa).

Residue 91–98 participates in ATP binding; the sequence is ASLYLGKS. 2 consecutive PLD phosphodiesterase domains span residues 177–203 and 419–457; these read GLGL…SNDY and NGWS…TRRA. Residues His-182, Lys-184, and Asp-189 contribute to the active site.

It belongs to the CDP-alcohol phosphatidyltransferase class-II family.

Its subcellular location is the mitochondrion. The enzyme catalyses a CDP-1,2-diacyl-sn-glycerol + sn-glycerol 3-phosphate = a 1,2-diacyl-sn-glycero-3-phospho-(1'-sn-glycero-3'-phosphate) + CMP + H(+). The protein operates within phospholipid metabolism; phosphatidylglycerol biosynthesis; phosphatidylglycerol from CDP-diacylglycerol: step 1/2. In terms of biological role, essential for the viability of mitochondrial petite mutant. Catalyzes the committed step to the synthesis of the acidic phospholipids. This Saccharomyces pastorianus (Lager yeast) protein is CDP-diacylglycerol--glycerol-3-phosphate 3-phosphatidyltransferase (PGS1).